The chain runs to 240 residues: Homeobox protein notochord (240 aa).

Over residues 1-13 (MSSPAPSGTQVQP) the composition is skewed to polar residues. Disordered regions lie at residues 1 to 21 (MSSP…PCPG) and 208 to 240 (QKLK…GIGS). The segment at residues 149–208 (TKRVRTTFNLQQLQELEKVFAKQHNLVGKERAQLAARLHLTENQVRIWFQNRRVKYQKQQ) is a DNA-binding region (homeobox). The segment covering 213–225 (PSSSVMEEPSSSS) has biased composition (low complexity).

The protein resides in the nucleus. Its function is as follows. Transcription factor that controls node morphogenesis. Acts downstream of both FOXA2 and Brachyury (T) during notochord development. Is essential for cilia formation in the posterior notochord (PNC) and for left-right patterning; acts upstream of FOXJ1 and RFX3 in this process and is required for the expression of various components important for axonemal assembly and function. Plays a role in regulating axial versus paraxial cell fate. Activates the transcription of ciliary proteins C11orf97 homolog, FAM183B and SPACA9 in the embryonic ventral node. In Mus musculus (Mouse), this protein is Homeobox protein notochord (Noto).